The following is a 458-amino-acid chain: Gamma aminobutyrate transaminase 2 (458 aa).

Residue 114–115 participates in pyridoxal 5'-phosphate binding; the sequence is GS. Substrate is bound at residue tyrosine 147. Residue aspartate 254 coordinates pyridoxal 5'-phosphate. Lysine 283 is a binding site for substrate. The residue at position 283 (lysine 283) is an N6-(pyridoxal phosphate)lysine.

The protein belongs to the class-III pyridoxal-phosphate-dependent aminotransferase family. Expressed in leaves, roots, stems, flowers and fruits. Expressed in carpels, but not in stamens.

The protein localises to the cytoplasm. It carries out the reaction 4-aminobutanoate + pyruvate = succinate semialdehyde + L-alanine. It catalyses the reaction 4-aminobutanoate + glyoxylate = succinate semialdehyde + glycine. Its function is as follows. Transaminase that degrades gamma-amino butyric acid (GABA) and uses pyruvate or glyoxylate as amino-group acceptor. Cannot use beta-alanine, ornithine, acetylornithine, serine, glycine, asparagine, glutamine, glutamate, valine, leucine, isoleucine, methionine, phenylalanine, histidine, lysine, arginine, aspartate, threonine, tyrosine, tryptophan, proline, or cysteine as amino donors. May be responsible for establishing the GABA gradient in the carpel. This is Gamma aminobutyrate transaminase 2 (GABA-TP2) from Solanum lycopersicum (Tomato).